Consider the following 342-residue polypeptide: Anthranilate phosphoribosyltransferase (342 aa).

5-phospho-alpha-D-ribose 1-diphosphate contacts are provided by residues Gly84, 87–88 (GD), Thr92, 94–97 (NIST), 112–120 (KHGGRSVSS), and Ser124. Residue Gly84 participates in anthranilate binding. Ser96 serves as a coordination point for Mg(2+). Arg170 contributes to the anthranilate binding site. Asp229 and Glu230 together coordinate Mg(2+).

This sequence belongs to the anthranilate phosphoribosyltransferase family. Homodimer. The cofactor is Mg(2+).

The enzyme catalyses N-(5-phospho-beta-D-ribosyl)anthranilate + diphosphate = 5-phospho-alpha-D-ribose 1-diphosphate + anthranilate. It participates in amino-acid biosynthesis; L-tryptophan biosynthesis; L-tryptophan from chorismate: step 2/5. Its function is as follows. Catalyzes the transfer of the phosphoribosyl group of 5-phosphorylribose-1-pyrophosphate (PRPP) to anthranilate to yield N-(5'-phosphoribosyl)-anthranilate (PRA). This Verminephrobacter eiseniae (strain EF01-2) protein is Anthranilate phosphoribosyltransferase.